A 143-amino-acid chain; its full sequence is Interleukin-4 (143 aa).

Positions 1–19 are cleaved as a signal peptide; sequence MGLSPQLAAVLLCLLVCTG. Disulfide bonds link Cys48/Cys88 and Cys70/Cys115. Asn62 and Asn91 each carry an N-linked (GlcNAc...) asparagine glycan.

Belongs to the IL-4/IL-13 family.

Its subcellular location is the secreted. In terms of biological role, participates in at least several B-cell activation processes as well as of other cell types. It is a costimulator of DNA-synthesis. It induces the expression of class II MHC molecules on resting B-cells. It enhances both secretion and cell surface expression of IgE and IgG1. It also regulates the expression of the low affinity Fc receptor for IgE (CD23) on both lymphocytes and monocytes. Positively regulates IL31RA expression in macrophages. Stimulates autophagy in dendritic cells by interfering with mTORC1 signaling and through the induction of RUFY4. This Meriones unguiculatus (Mongolian jird) protein is Interleukin-4 (IL4).